The chain runs to 466 residues: Asparagine--tRNA ligase (466 aa).

It belongs to the class-II aminoacyl-tRNA synthetase family. As to quaternary structure, homodimer.

The protein localises to the cytoplasm. The catalysed reaction is tRNA(Asn) + L-asparagine + ATP = L-asparaginyl-tRNA(Asn) + AMP + diphosphate + H(+). The sequence is that of Asparagine--tRNA ligase from Colwellia psychrerythraea (strain 34H / ATCC BAA-681) (Vibrio psychroerythus).